A 288-amino-acid chain; its full sequence is Cyclin-dependent kinase 2 homolog (288 aa).

The Protein kinase domain maps to 4–284; sequence YHGLEKIGEG…AKQAIEHPYF (281 aa). ATP contacts are provided by residues 10–18 and K32; that span reads IGEGTYGVV. T14 is subject to Phosphothreonine. Phosphotyrosine is present on Y15. D125 (proton acceptor) is an active-site residue. Position 158 is a phosphothreonine (T158).

It belongs to the protein kinase superfamily. CMGC Ser/Thr protein kinase family. CDC2/CDKX subfamily. May form a complex composed of at least the catalytic subunit CRK2 and a cyclin. The cofactor is Mg(2+).

The protein resides in the cytoplasm. It carries out the reaction L-seryl-[protein] + ATP = O-phospho-L-seryl-[protein] + ADP + H(+). The catalysed reaction is L-threonyl-[protein] + ATP = O-phospho-L-threonyl-[protein] + ADP + H(+). The enzyme catalyses [DNA-directed RNA polymerase] + ATP = phospho-[DNA-directed RNA polymerase] + ADP + H(+). With respect to regulation, phosphorylation at Thr-14 or Tyr-15 inactivates the enzyme, while phosphorylation at Thr-158 activates it. Functionally, serine/threonine-protein kinase. Involved in the control of the cell cycle. Required for entry into S-phase and mitosis. Probable component of the kinase complex that phosphorylates the repetitive C-terminus of RNA polymerase II. The polypeptide is Cyclin-dependent kinase 2 homolog (Plasmodium berghei (strain Anka)).